We begin with the raw amino-acid sequence, 387 residues long: Putative acid--amine ligase YjfC (387 aa).

ATP is bound at residue 101-103 (RMD). Residues aspartate 103, glutamate 116, and asparagine 118 each contribute to the Mg(2+) site. ATP is bound by residues lysine 265, lysine 302, glycine 309, glutamine 337, and 372–374 (LIT).

This sequence belongs to the glutathionylspermidine synthase preATP-grasp family.

May be a ligase forming an amide bond. Shows ATPase activity. Despite its similarity to the C-terminal synthetase domain of Gss, is not a glutathionylspermidine (Gsp) synthetase. Cannot synthesize Gsp, glutathione (GSH), or GSH intermediates, from GSH and spermidine, cysteine and glutamate, gamma-glutamylcysteine and spermidine, and gamma-glutamylcysteine and glycine. Does not bind to Gsp. In Escherichia coli (strain K12), this protein is Putative acid--amine ligase YjfC (yjfC).